Here is a 372-residue protein sequence, read N- to C-terminus: E3 ubiquitin-protein ligase RNF34 (372 aa).

Residues 56 to 107 (EGPNIVCKACGLSFSVFRKKHVCCDCKKDFCSVCSVLQENLRRCSTCHLLQE) form an FYVE-type zinc finger. In terms of domain architecture, SAP 1 spans 115 to 134 (LMRLKVKDLRQYLILRNIPT). At Ser169 the chain carries Phosphoserine. Residues 194–252 (QGELMDGDQTSRSGVPAQVQSEITSANTEDDDDDDDEDDDDEEENAEDQNPGLSKERVR) are disordered. The segment covering 201-220 (DQTSRSGVPAQVQSEITSAN) has biased composition (polar residues). The segment covering 221–240 (TEDDDDDDDEDDDDEEENAE) has biased composition (acidic residues). Ser254 and Ser256 each carry phosphoserine. In terms of domain architecture, SAP 2 spans 264 to 278 (VEGMSVRQLKEILAR). The RING-type zinc-finger motif lies at 325 to 360 (CRICMDAVIDCVLLECGHMVTCTKCGKRMSECPICR).

As to quaternary structure, interacts with CASP8 and CASP10. Interacts with p53/TP53; involved in p53/TP53 ubiquitination. Interacts (via RING-type zinc finger) with MDM2; the interaction stabilizes MDM2. Interacts (via RING-type zinc finger) with PPARGC1A. Interacts with NOD1. Autoubiquitinated (in vitro). In terms of processing, proteolytically cleaved by caspases upon induction of apoptosis by TNF.

It is found in the cell membrane. The protein localises to the endomembrane system. It localises to the nucleus. Its subcellular location is the nucleus speckle. The protein resides in the cytoplasm. It is found in the cytosol. The enzyme catalyses S-ubiquitinyl-[E2 ubiquitin-conjugating enzyme]-L-cysteine + [acceptor protein]-L-lysine = [E2 ubiquitin-conjugating enzyme]-L-cysteine + N(6)-ubiquitinyl-[acceptor protein]-L-lysine.. It participates in protein modification; protein ubiquitination. E3 ubiquitin-protein ligase that regulates several biological processes through the ubiquitin-mediated proteasomal degradation of various target proteins. Ubiquitinates the caspases CASP8 and CASP10, promoting their proteasomal degradation, to negatively regulate cell death downstream of death domain receptors in the extrinsic pathway of apoptosis. May mediate 'Lys-48'-linked polyubiquitination of RIPK1 and its subsequent proteasomal degradation thereby indirectly regulating the tumor necrosis factor-mediated signaling pathway. Negatively regulates p53/TP53 through its direct ubiquitination and targeting to proteasomal degradation. Indirectly, may also negatively regulate p53/TP53 through ubiquitination and degradation of SFN. Mediates PPARGC1A proteasomal degradation probably through ubiquitination thereby indirectly regulating the metabolism of brown fat cells. Possibly involved in innate immunity, through 'Lys-48'-linked polyubiquitination of NOD1 and its subsequent proteasomal degradation. This is E3 ubiquitin-protein ligase RNF34 (RNF34) from Pongo abelii (Sumatran orangutan).